Here is a 172-residue protein sequence, read N- to C-terminus: Scytalone dehydratase-like protein Arp1 (172 aa).

Tyrosine 49 is a binding site for substrate. Active-site residues include histidine 84 and histidine 109. Asparagine 130 contributes to the substrate binding site.

It belongs to the scytalone dehydratase family. Homotrimer. Each subunit contains an active site, located in the central part of the hydrophobic core of the monomer, which functions independently.

Scytalone dehydratase-like protein; part of the Pks2 gene cluster that mediates the formation of infectious structures (appressoria), enabling these fungi to kill insects faster. The product of the Pks2 gene cluster is different from the one of Pks1 and has still not been identified. The chain is Scytalone dehydratase-like protein Arp1 from Metarhizium guizhouense (strain ARSEF 977).